Consider the following 348-residue polypeptide: Dihydroorotase (348 aa).

Zn(2+) contacts are provided by H14 and H16. Residues 16–18 (HLR) and N42 each bind substrate. 3 residues coordinate Zn(2+): K100, H137, and H175. K100 carries the post-translational modification N6-carboxylysine. H137 provides a ligand contact to substrate. Residue L220 coordinates substrate. D248 serves as a coordination point for Zn(2+). D248 is an active-site residue. 2 residues coordinate substrate: H252 and A264.

It belongs to the metallo-dependent hydrolases superfamily. DHOase family. Class II DHOase subfamily. In terms of assembly, homodimer. The cofactor is Zn(2+).

The catalysed reaction is (S)-dihydroorotate + H2O = N-carbamoyl-L-aspartate + H(+). It participates in pyrimidine metabolism; UMP biosynthesis via de novo pathway; (S)-dihydroorotate from bicarbonate: step 3/3. Catalyzes the reversible cyclization of carbamoyl aspartate to dihydroorotate. This is Dihydroorotase from Pseudomonas fluorescens (strain SBW25).